A 220-amino-acid polypeptide reads, in one-letter code: Iron-sulfur cluster repair protein YtfE (220 aa).

This sequence belongs to the RIC family. YtfE subfamily. As to quaternary structure, homodimer.

It is found in the cytoplasm. Functionally, di-iron-containing protein involved in the repair of iron-sulfur clusters damaged by oxidative and nitrosative stress conditions. This chain is Iron-sulfur cluster repair protein YtfE, found in Escherichia coli O81 (strain ED1a).